A 422-amino-acid polypeptide reads, in one-letter code: Enolase (422 aa).

Position 162 (Gln162) interacts with (2R)-2-phosphoglycerate. Glu204 (proton donor) is an active-site residue. Positions 241, 284, and 311 each coordinate Mg(2+). (2R)-2-phosphoglycerate is bound by residues Lys336, Arg365, Ser366, and Lys387. Catalysis depends on Lys336, which acts as the Proton acceptor.

This sequence belongs to the enolase family. Component of the RNA degradosome, a multiprotein complex involved in RNA processing and mRNA degradation. The cofactor is Mg(2+).

It localises to the cytoplasm. The protein resides in the secreted. Its subcellular location is the cell surface. It carries out the reaction (2R)-2-phosphoglycerate = phosphoenolpyruvate + H2O. It functions in the pathway carbohydrate degradation; glycolysis; pyruvate from D-glyceraldehyde 3-phosphate: step 4/5. Catalyzes the reversible conversion of 2-phosphoglycerate (2-PG) into phosphoenolpyruvate (PEP). It is essential for the degradation of carbohydrates via glycolysis. This is Enolase from Legionella pneumophila (strain Lens).